An 87-amino-acid polypeptide reads, in one-letter code: Large ribosomal subunit protein eL31 (87 aa).

This sequence belongs to the eukaryotic ribosomal protein eL31 family.

This chain is Large ribosomal subunit protein eL31, found in Methanosphaerula palustris (strain ATCC BAA-1556 / DSM 19958 / E1-9c).